The sequence spans 362 residues: MGTPAIRAACHGAHLALALLLLLSLSDPWLWATAPGTPPLFNVSLDAAPELRWLPMLQHYDPDFVRAAVAQVIGDRVPQWILEMIGEIVQKVESFLPQPFTSEIRGICDYLNLSLAEGVLVNLAYEASAFCTSIVAQDSQGRIYHGRNLDYPFGNALRKLTADVQFVKNGQIVFTATTFVGYVGLWTGQSPHKFTISGDERDKGWWWENMIAALSLGHSPISWLIRKTLTESEDFEAAVYTLAKTPLIADVYYIVGGTSPQEGVVITRDRGGPADIWPLDPLNGAWFRVETNYDHWEPVPKRDDRRTPAIKALNATGQAHLSLETLFQVLSVFPVYNNYTIYTTVMSAAEPDKYMTMIRNPS.

A signal peptide spans 1 to 33 (MGTPAIRAACHGAHLALALLLLLSLSDPWLWAT). Residues Asn-42 and Asn-112 are each glycosylated (N-linked (GlcNAc...) asparagine). Cys-131 (nucleophile) is an active-site residue. N-linked (GlcNAc...) asparagine glycosylation is found at Asn-314 and Asn-338.

It belongs to the acid ceramidase family. As to quaternary structure, heterodimer of an alpha and a beta subunit, produced by autocatalytic cleavage. In terms of processing, N-glycosylated. Tunicamycin treatment causes a reduction in specific activity against N-palmitoylethanolamine. Autoproteolytic cleavage at pH 4.5 gives rise to the alpha and beta subunit. Cleavage gives rise to a conformation change that activates the enzyme. The same catalytic Cys residue mediates the autoproteolytic cleavage and subsequent hydrolysis of lipid substrates. Expressed in brain, cecum, colon, heart, ileum, kidney, liver, lung, spleen, stomach, submaxillary gland, testis and thymus.

Its subcellular location is the lysosome. The protein localises to the membrane. The catalysed reaction is N-hexadecanoylethanolamine + H2O = ethanolamine + hexadecanoate. The enzyme catalyses an N-(long-chain fatty acyl)ethanolamine + H2O = a long-chain fatty acid + ethanolamine. It carries out the reaction N-dodecanoylethanolamine + H2O = dodecanoate + ethanolamine. It catalyses the reaction N-tetradecanoylethanolamine + H2O = tetradecanoate + ethanolamine. The catalysed reaction is an N-acylsphing-4-enine + H2O = sphing-4-enine + a fatty acid. The enzyme catalyses N-hexadecanoylsphing-4-enine + H2O = sphing-4-enine + hexadecanoate. It carries out the reaction N-dodecanoylsphing-4-enine + H2O = dodecanoate + sphing-4-enine. It functions in the pathway lipid metabolism; fatty acid metabolism. Its activity is regulated as follows. Stimulated by DTT. Stimulated by nonionic detergent of the polyoxyethylenep-t-octylphenylether type (Triton X-100 or Nonidet P-40) whereas 3-[(3-cholamidopropyl)dimethylammonio]propane-1-sulfonate (CHAPS) and octyl alpha-D-glucopyranoside decrease the N-(long-chain-acyl)ethanolamine deacylase activity. Polysorbate 20 (Tween 20) is inhibitory. Stimulated by endogenous phospholipids such as choline- or ethanolamine-containing phospholipids, and dihydrolipoic acid. Degrades bioactive fatty acid amides to their corresponding acids, with the following preference: N-palmitoylethanolamine &gt; N-myristoylethanolamine &gt; N-stearoylethanolamine &gt; N-oleoylethanolamine &gt; N-linoleoylethanolamine &gt; N-arachidonoylethanolamine. This chain is N-acylethanolamine-hydrolyzing acid amidase, found in Rattus norvegicus (Rat).